The chain runs to 659 residues: Pollen receptor-like kinase 6 (659 aa).

The signal sequence occupies residues 1–26 (MAAAVLNPGFFLLILLLSFSISPSLQ). The Extracellular segment spans residues 27 to 266 (YVSESEPLVR…SVPETSNKAA (240 aa)). Cys58 and Cys67 are oxidised to a cystine. LRR repeat units follow at residues 95-118 (LPNL…FFKL), 120-142 (GLKS…FFKD), 143-167 (MSKL…ITQL), 168-190 (PQLE…EFGS), and 192-214 (KNLK…SIAD). The N-linked (GlcNAc...) asparagine glycan is linked to Asn128. A glycan (N-linked (GlcNAc...) asparagine) is linked at Asn179. An N-linked (GlcNAc...) asparagine glycan is attached at Asn221. Residues 226–242 (EYLCGPVVDVGCENIEL) form an LURE peptides binding region. Cys229 and Cys237 are oxidised to a cystine. A disordered region spans residues 241 to 260 (ELNDPQEGQPPSKPSSSVPE). Residues 267-287 (INAIMVSISLLLLFFIIVGVI) form a helical membrane-spanning segment. Over 288-659 (KRRNKKKNPD…AVRRIEQVKT (372 aa)) the chain is Cytoplasmic. The tract at residues 312 to 354 (VRISESSSTTAKRSTDSSRKRGGHSDDGSTKKGVSNIGKGGNG) is disordered. Residues 324–341 (RSTDSSRKRGGHSDDGST) are compositionally biased toward basic and acidic residues. In terms of domain architecture, Protein kinase spans 384-659 (KAAAEVLGNG…AVRRIEQVKT (276 aa)). ATP is bound by residues 390 to 398 (LGNGSLGSA) and Lys412. Residue Ser464 is modified to Phosphoserine. A phosphothreonine mark is found at Thr484 and Thr557. Phosphoserine is present on Ser561.

It belongs to the protein kinase superfamily. Ser/Thr protein kinase family. Interacts with ROPGEF8, ROPGEF9, ROPGEF12, ROPGEF13, PRK3, LIP1 and LIP2. Binds to LURE peptides via its LRR repeats; interacts with LURE1.1, LURE1.2, LURE1.3 and LURE1.4. Expressed specifically in the pollen tube, predominantly at the tip.

Its subcellular location is the cell membrane. It is found in the cytoplasmic granule. In terms of biological role, key receptor for sensing species-specific attractants in cooperation with other pollen receptor-like kinases. Essential for pollen tube reorientation toward attractant peptides. This is Pollen receptor-like kinase 6 from Arabidopsis thaliana (Mouse-ear cress).